Consider the following 580-residue polypeptide: Tetratricopeptide repeat protein 39C (580 aa).

TPR repeat units lie at residues 312-345, 350-383, and 482-515; these read SLFM…AVDQ, HVCL…SRWS, and GLKH…ELCR.

It belongs to the TTC39 family.

The protein is Tetratricopeptide repeat protein 39C (Ttc39c) of Mus musculus (Mouse).